A 145-amino-acid polypeptide reads, in one-letter code: D-aminoacyl-tRNA deacylase (145 aa).

The Gly-cisPro motif, important for rejection of L-amino acids motif lies at 137 to 138 (GP).

This sequence belongs to the DTD family. In terms of assembly, homodimer.

Its subcellular location is the cytoplasm. The catalysed reaction is glycyl-tRNA(Ala) + H2O = tRNA(Ala) + glycine + H(+). It carries out the reaction a D-aminoacyl-tRNA + H2O = a tRNA + a D-alpha-amino acid + H(+). Its function is as follows. An aminoacyl-tRNA editing enzyme that deacylates mischarged D-aminoacyl-tRNAs. Also deacylates mischarged glycyl-tRNA(Ala), protecting cells against glycine mischarging by AlaRS. Acts via tRNA-based rather than protein-based catalysis; rejects L-amino acids rather than detecting D-amino acids in the active site. By recycling D-aminoacyl-tRNA to D-amino acids and free tRNA molecules, this enzyme counteracts the toxicity associated with the formation of D-aminoacyl-tRNA entities in vivo and helps enforce protein L-homochirality. In Lactobacillus gasseri (strain ATCC 33323 / DSM 20243 / BCRC 14619 / CIP 102991 / JCM 1131 / KCTC 3163 / NCIMB 11718 / NCTC 13722 / AM63), this protein is D-aminoacyl-tRNA deacylase.